Consider the following 320-residue polypeptide: Rhomboid-like protein 17, chloroplastic (320 aa).

The N-terminal 87 residues, 1–87 (MHAIFSSFSR…LKFGNVMESR (87 aa)), are a transit peptide targeting the chloroplast. The next 5 membrane-spanning stretches (helical) occupy residues 116–136 (WING…AVFT), 160–180 (LITS…MIGI), 199–219 (LYFA…ALLA), 247–267 (MFAI…YFAL), and 295–315 (IASS…WARI).

It belongs to the peptidase S54 family.

Its subcellular location is the plastid. The protein localises to the chloroplast membrane. In terms of biological role, probable rhomboid-type serine protease that catalyzes intramembrane proteolysis. The protein is Rhomboid-like protein 17, chloroplastic of Arabidopsis thaliana (Mouse-ear cress).